Here is a 386-residue protein sequence, read N- to C-terminus: Bifunctional desaturase/conjugase FADX (386 aa).

The disordered stretch occupies residues 1–28 (MGAGGRMSVAPNNSKCEKKESRSVKRVP). A run of 2 helical transmembrane segments spans residues 65-85 (LSFI…SPIT) and 87-107 (IAWP…WVLG). Positions 108–112 (HECGH) match the Histidine box-1 motif. The Histidine box-2 motif lies at 144 to 148 (HRRHH). 3 helical membrane passes run 182-202 (ALTL…FNVS), 228-248 (IYIS…IAMA), and 250-270 (GLAW…ALVV). A Histidine box-3 motif is present at residues 318-322 (HVIHH).

The protein belongs to the fatty acid desaturase type 1 family. As to expression, expressed exclusively in developing seeds.

The protein resides in the endoplasmic reticulum membrane. It carries out the reaction a (9Z,12Z)-octadecadienoyl-containing glycerolipid + 2 Fe(II)-[cytochrome b5] + O2 + 2 H(+) = a (9Z,11E,13E)-octadecatrienoyl-containing glycerolipid + 2 Fe(III)-[cytochrome b5] + 2 H2O. The catalysed reaction is (9Z,12Z,15Z)-octadecatrienoyl-containing glycerolipid + 2 Fe(II)-[cytochrome b5] + O2 + 2 H(+) = a (9Z,11E,13E,15Z)-octadecatetraenoyl-containing glycerolipid + 2 Fe(III)-[cytochrome b5] + 2 H2O. It catalyses the reaction a (9Z)-octadecenoyl-containing glycerolipid + 2 Fe(II)-[cytochrome b5] + O2 + 2 H(+) = a (9Z,12E)-octadecadienoyl-containing glycerolipid + 2 Fe(III)-[cytochrome b5] + 2 H2O. The enzyme catalyses a (9Z)-hexadecenoyl-containing glycerolipid + 2 Fe(II)-[cytochrome b5] + O2 + 2 H(+) = a (9Z,12E)-hexadecadienoyl-containing glycerolipid + 2 Fe(III)-[cytochrome b5] + 2 H2O. It functions in the pathway lipid metabolism; polyunsaturated fatty acid biosynthesis. In terms of biological role, converts linoleic acid to alpha-eleostearic acid (18:3(9Z,11E,13E)) and alpha-linolenic acid to alpha-parinaric acid (18:4(9Z,11E,13E,15Z)). Converts a single cis double bond at carbon 12 to two conjugated trans bonds at positions 11 and 13. Can also act as a 12(E) desaturase when acting on the monounsaturated fatty acids oleate and palmitoleate, stereoselectively introducing a trans double bond. The polypeptide is Bifunctional desaturase/conjugase FADX (Vernicia fordii (Tung)).